Reading from the N-terminus, the 808-residue chain is Putative dimethyl sulfoxide reductase chain YnfE (808 aa).

The tat-type signal signal peptide spans 1–43 (MSKNERMVGISRRTLVKSTAIGSLALAAGGFSLPFTLRNAAAA). In terms of domain architecture, 4Fe-4S Mo/W bis-MGD-type spans 49–110 (EKVVWGACSV…SIRRRINHPD (62 aa)). Residues C56, C60, C64, and C96 each contribute to the [4Fe-4S] cluster site. A Mo-bis(molybdopterin guanine dinucleotide)-binding site is contributed by S196.

This sequence belongs to the prokaryotic molybdopterin-containing oxidoreductase family. The cofactor is [4Fe-4S] cluster. Mo-bis(molybdopterin guanine dinucleotide) is required as a cofactor. In terms of processing, exported by the Tat system. The position of the signal peptide cleavage has not been experimentally proven.

It localises to the cell membrane. In terms of biological role, terminal reductase during anaerobic growth on various sulfoxide and N-oxide compounds. The chain is Putative dimethyl sulfoxide reductase chain YnfE (ynfE) from Escherichia coli (strain K12).